The sequence spans 474 residues: Ribulose bisphosphate carboxylase large chain (474 aa).

Residues asparagine 117 and threonine 167 each coordinate substrate. Lysine 169 acts as the Proton acceptor in catalysis. Position 171 (lysine 171) interacts with substrate. Mg(2+) contacts are provided by lysine 195, aspartate 197, and glutamate 198. Lysine 195 carries the N6-carboxylysine modification. The active-site Proton acceptor is the histidine 288. Substrate-binding residues include arginine 289, histidine 321, and serine 373.

The protein belongs to the RuBisCO large chain family. Type I subfamily. In terms of assembly, heterohexadecamer of 8 large chains and 8 small chains. Mg(2+) serves as cofactor.

It catalyses the reaction 2 (2R)-3-phosphoglycerate + 2 H(+) = D-ribulose 1,5-bisphosphate + CO2 + H2O. It carries out the reaction D-ribulose 1,5-bisphosphate + O2 = 2-phosphoglycolate + (2R)-3-phosphoglycerate + 2 H(+). Functionally, ruBisCO catalyzes two reactions: the carboxylation of D-ribulose 1,5-bisphosphate, the primary event in carbon dioxide fixation, as well as the oxidative fragmentation of the pentose substrate. Both reactions occur simultaneously and in competition at the same active site. The chain is Ribulose bisphosphate carboxylase large chain from Hydrogenophilus thermoluteolus (Pseudomonas hydrogenothermophila).